Consider the following 261-residue polypeptide: Carbonic anhydrase 1 (261 aa).

Residue alanine 2 is modified to N-acetylalanine. Residues 4 to 261 form the Alpha-carbonic anhydrase domain; it reads PDWGYDDKNG…LKGRTVRASF (258 aa). Catalysis depends on histidine 65, which acts as the Proton donor/acceptor. Zn(2+) contacts are provided by histidine 95, histidine 97, and histidine 120. Substrate-binding positions include threonine 200 and 200–201; that span reads TH. A disordered region spans residues 238 to 261; the sequence is NPVPIQRNNRPTQPLKGRTVRASF.

The protein belongs to the alpha-carbonic anhydrase family. Zn(2+) serves as cofactor.

The protein localises to the cytoplasm. The catalysed reaction is hydrogencarbonate + H(+) = CO2 + H2O. It catalyses the reaction urea = cyanamide + H2O. Its activity is regulated as follows. Inhibited by acetazolamide. Catalyzes the reversible hydration of carbon dioxide. Can hydrate cyanamide to urea. The chain is Carbonic anhydrase 1 (CA1) from Macaca mulatta (Rhesus macaque).